The sequence spans 561 residues: Putative transport protein YbjL (561 aa).

Helical transmembrane passes span 8-28, 32-52, 66-86, 94-114, and 158-178; these read LLNG…LCLG, LGSV…LLGQ, FMLF…SIFF, MLAL…GKLF, and NLSL…IVGA. RCK C-terminal domains lie at 200–288 and 292–373; these read RGLD…SFRN and VFDR…RIGF. 5 helical membrane passes run 383–403, 406–426, 447–467, 475–495, and 540–560; these read LLAF…TFQF, FSFG…LGFL, FGLM…ISNG, MLIA…LFGA, and AIAN…WPGL.

The protein belongs to the AAE transporter (TC 2.A.81) family. YbjL subfamily.

It localises to the cell membrane. In Salmonella agona (strain SL483), this protein is Putative transport protein YbjL.